The following is an 841-amino-acid chain: Probable inorganic carbon transporter subunit DabA 1 (841 aa).

Zn(2+) is bound by residues Cys352, Asp354, His536, and Cys551.

Belongs to the inorganic carbon transporter (TC 9.A.2) DabA family. In terms of assembly, forms a complex with DabB. It depends on Zn(2+) as a cofactor.

It is found in the cell inner membrane. Part of an energy-coupled inorganic carbon pump. The protein is Probable inorganic carbon transporter subunit DabA 1 of Bradyrhizobium sp. (strain ORS 278).